The sequence spans 495 residues: MFLQIAACFTVIGLLYGLVSNLQQNRRLAASLPPGPPGHWLFGNVPPKNFPFIRFAELTEIYGPVFTLRFGRRIVCVVGRHQAAVDILVKHSAETTDRPRAIAASEMLSQGFRILMTPAGERLKKYRRAFHTCLQPSAAATYKPIQYNHAKNYILDCLHDGKCHLEHGRRYAASVVMYIGYGKTTPTSYSDPEVQEVNKCLGRLSEVIKPGAYLVDTYPILKHIPGYASHLWRYGREELALYTRQANAVRKQLEKDEAQPSFAAYLIENQERLGLSNDELAYLSGAIFGAGSDTTAAAIAVMTMAAACYPETQARVQAQLDEVVGSDRAPTFEDEEMLPEVTAFVLEVYRWRPVSAGGVPHRSTKDIVWNGYVIPKGTEIIGNLWAIGRDPELFPDAEEFRPQRWLNENGRIRDDLKYPVFGFGRRVCVGQHVADQSLFINTALALWAFKISQDPAKPIDVLAFTDTANIRPLPFTLRFEPRVKDIEAVLEAHLD.

The helical transmembrane segment at 2–22 (FLQIAACFTVIGLLYGLVSNL) threads the bilayer. Heme is bound at residue Cys428.

Belongs to the cytochrome P450 family. Requires heme as cofactor.

It is found in the membrane. The protein operates within secondary metabolite biosynthesis. Cytochrome P450 monooxygenase that is able to use 4-ethoxybenzoic acid as a substrate for oxidation. In Postia placenta (strain ATCC 44394 / Madison 698-R) (Brown rot fungus), this protein is Cytochrome P450 monooxygenase 113.